Consider the following 180-residue polypeptide: Succinate dehydrogenase cytochrome B subunit, mitochondrial (180 aa).

Residues 1–82 (MFATRSFCLS…WYLSSLHRIT (82 aa)) lie on the Mitochondrial matrix side of the membrane. Residues 83 to 103 (GCVVAGTLYAFAMGYLVAPLA) traverse the membrane as a helical segment. The Mitochondrial intermembrane portion of the chain corresponds to 104–122 (GYSLDTATISGLIQQVPTW). The chain crosses the membrane as a helical span at residues 123-143 (IKVPAKFVISYPLTFHIFNGI). His138 provides a ligand contact to heme. Topologically, residues 144-159 (RHLIWDTTKELSLKGV) are mitochondrial matrix. A helical membrane pass occupies residues 160–180 (YRTGYAVLALSVLTSGYFAMI).

Belongs to the cytochrome b560 family. Forms part of complex II containing four subunits: a 70 kDa flavoprotein (FP), a 27 kDa iron-sulfur protein (IP), a cytochrome B and a membrane-anchoring protein. Heme is required as a cofactor.

It localises to the mitochondrion inner membrane. It participates in carbohydrate metabolism; tricarboxylic acid cycle. Functionally, membrane-anchoring subunit of succinate dehydrogenase (SDH) that is involved in complex II of the mitochondrial electron transport chain and is responsible for transferring electrons from succinate to ubiquinone (coenzyme Q). This is Succinate dehydrogenase cytochrome B subunit, mitochondrial (sdh3) from Schizosaccharomyces pombe (strain 972 / ATCC 24843) (Fission yeast).